The chain runs to 548 residues: Synaptic vesicle 2-related protein (548 aa).

Residues 1–87 (MEDDLFQLRH…GFGKFQWKLS (87 aa)) lie on the Cytoplasmic side of the membrane. The helical transmembrane segment at 88-108 (MLTGLAWMADAMEMMILSILA) threads the bilayer. Residues 109 to 119 (PQLHCEWRLPS) lie on the Vesicular side of the membrane. A helical transmembrane segment spans residues 120-140 (WQVALLTSVVFIGMMASSSLW). At 141-156 (GNVSDQYGRRTGLKIS) the chain is on the cytoplasmic side. A helical transmembrane segment spans residues 157–177 (VIWTLYYGILSAFAPVYSWIL). The Vesicular portion of the chain corresponds to 178–180 (VLR). Residues 181–201 (GLVGFGIGGVPQSVTLYAEFL) form a helical membrane-spanning segment. Residues 202 to 209 (PMKSRAKC) lie on the Cytoplasmic side of the membrane. The chain crosses the membrane as a helical span at residues 210–230 (ILLIEIFWALGTVFEVLLAIF). Topologically, residues 231–238 (VMPTLGWR) are vesicular. The helical transmembrane segment at 239–259 (WLLILSALPLMLFAILCFWLP) threads the bilayer. Residues 260–316 (ESARYEVLSGNQEKALATLKRIATENGAPMPLGKLIVSRQEDRGKIRDLFSPQFRCT) are Cytoplasmic-facing. The helical transmembrane segment at 317–337 (TLLLWFIWFSNAFSYYGLVLL) threads the bilayer. The Vesicular segment spans residues 338–373 (TTELFQAGDVCSISNQRKAVKPKCSLACEYLTVEDY). A helical transmembrane segment spans residues 374 to 394 (TDLLWTTLSEFPGLLVTLWII). Residues 395–401 (DRVGRKK) lie on the Cytoplasmic side of the membrane. The helical transmembrane segment at 402–422 (TMAICFIIFSFSALLLFLCVG) threads the bilayer. Topologically, residues 423-424 (RN) are vesicular. A helical transmembrane segment spans residues 425 to 445 (VLTVFLFIARAFISGGFQAAY). The Cytoplasmic portion of the chain corresponds to 446-457 (VYTPEVYPTATR). Residues 458–478 (ALGLGTCSGMARVGALITPFI) traverse the membrane as a helical segment. Residues 479-486 (AQVMLESS) lie on the Vesicular side of the membrane. A helical membrane pass occupies residues 487-507 (IYLTVLVYSGCCVLAAVASCF). Residues 508–548 (LPIETKGRGLQESSHREWGQEMVGRGTHNVGATPSHSGSQE) lie on the Cytoplasmic side of the membrane. Positions 519–548 (ESSHREWGQEMVGRGTHNVGATPSHSGSQE) are disordered. Positions 537–548 (VGATPSHSGSQE) are enriched in polar residues.

Belongs to the major facilitator superfamily. Detected in embryonic trigeminal ganglion and spinal cord.

Its subcellular location is the cytoplasmic vesicle. It localises to the secretory vesicle. The protein localises to the synaptic vesicle membrane. This chain is Synaptic vesicle 2-related protein (svop), found in Xenopus laevis (African clawed frog).